The sequence spans 844 residues: DNA mismatch repair protein MutS (844 aa).

610–617 (GPNMGGKS) is an ATP binding site.

The protein belongs to the DNA mismatch repair MutS family.

Functionally, this protein is involved in the repair of mismatches in DNA. It is possible that it carries out the mismatch recognition step. This protein has a weak ATPase activity. This is DNA mismatch repair protein MutS from Francisella tularensis subsp. novicida (strain U112).